Here is a 174-residue protein sequence, read N- to C-terminus: Probable inosine/xanthosine triphosphatase (174 aa).

Mg(2+) is bound at residue Asp-63.

Belongs to the YjjX NTPase family. Homodimer. Mg(2+) serves as cofactor. It depends on Mn(2+) as a cofactor.

The catalysed reaction is XTP + H2O = XDP + phosphate + H(+). It catalyses the reaction ITP + H2O = IDP + phosphate + H(+). Phosphatase that hydrolyzes non-canonical purine nucleotides such as XTP and ITP to their respective diphosphate derivatives. Probably excludes non-canonical purines from DNA/RNA precursor pool, thus preventing their incorporation into DNA/RNA and avoiding chromosomal lesions. This chain is Probable inosine/xanthosine triphosphatase, found in Methanocella arvoryzae (strain DSM 22066 / NBRC 105507 / MRE50).